The primary structure comprises 353 residues: Rhodopsin (353 aa).

Residues 1–36 are Extracellular-facing; it reads MNGTEGPYFYIPMVNTTGIVRSPYEYPQYYLVNPAA. N-linked (GlcNAc...) asparagine glycans are attached at residues asparagine 2 and asparagine 15. A helical transmembrane segment spans residues 37-61; that stretch reads YAALGAYMFLLILLGFPINFLTLYV. At 62-73 the chain is on the cytoplasmic side; sequence TIEHKKLRTPLN. A helical transmembrane segment spans residues 74–96; that stretch reads YILLNLAVANLFMVFGGFTTTMY. The Extracellular portion of the chain corresponds to 97 to 110; that stretch reads TSMHGYFVLGRLGC. Cysteine 110 and cysteine 187 are oxidised to a cystine. A helical transmembrane segment spans residues 111–133; it reads NLEGFFATLGGEIALWSLVVLAV. Positions 134 to 136 match the 'Ionic lock' involved in activated form stabilization motif; it reads ERW. Topologically, residues 134-152 are cytoplasmic; it reads ERWMVVCKPISNFRFGENH. A helical membrane pass occupies residues 153–173; the sequence is AIMGLAFTWVMASACAVPPLV. Over 174–202 the chain is Extracellular; it reads GWSRYIPEGMQCSCGIDYYTRAEGFNNES. A glycan (N-linked (GlcNAc...) asparagine) is linked at asparagine 200. A helical transmembrane segment spans residues 203-224; sequence FVIYMFVCHFLIPLVVVFFCYG. At 225-252 the chain is on the cytoplasmic side; sequence RLLCAVKEAAAAQQESETTQRAEREVSR. The helical transmembrane segment at 253–274 threads the bilayer; that stretch reads MVVIMVVAFLICWCPYAGVAWY. Topologically, residues 275 to 286 are extracellular; the sequence is IFTHQGSEFGPL. Residues 287–308 form a helical membrane-spanning segment; the sequence is FMTFPAFFAKSSSIYNPMIYIC. Lysine 296 carries the N6-(retinylidene)lysine modification. The Cytoplasmic portion of the chain corresponds to 309–353; that stretch reads MNKQFRHCMITTLCCGKNPFEEEEGASTTSKTEASSVSSSSVSPA. Residues cysteine 322 and cysteine 323 are each lipidated (S-palmitoyl cysteine). The interval 330–353 is disordered; the sequence is EEEGASTTSKTEASSVSSSSVSPA. The segment covering 334–353 has biased composition (low complexity); the sequence is ASTTSKTEASSVSSSSVSPA.

It belongs to the G-protein coupled receptor 1 family. Opsin subfamily. In terms of processing, phosphorylated on some or all of the serine and threonine residues present in the C-terminal region. Contains one covalently linked retinal chromophore.

It is found in the membrane. Its subcellular location is the cell projection. The protein resides in the cilium. It localises to the photoreceptor outer segment. Its function is as follows. Photoreceptor required for image-forming vision at low light intensity. While most salt water fish species use retinal as chromophore, most freshwater fish use 3-dehydroretinal, or a mixture of retinal and 3-dehydroretinal. Light-induced isomerization of 11-cis to all-trans retinal triggers a conformational change that activates signaling via G-proteins. Subsequent receptor phosphorylation mediates displacement of the bound G-protein alpha subunit by arrestin and terminates signaling. This chain is Rhodopsin (rho), found in Mugil cephalus (Flathead mullet).